Here is a 484-residue protein sequence, read N- to C-terminus: Nuclear rim protein 1 (484 aa).

The residue at position 3 (serine 3) is a Phosphoserine. 2 consecutive transmembrane segments (helical) span residues 145-165 and 252-272; these read FTIF…MFGY and TAIV…AIVF. The segment at 416-458 is disordered; it reads SSNENLEKGGAFLPNQDQNRPSKSLSPLRKTPLSARQKRFEGS. At serine 417 the chain carries Phosphoserine. Positions 430–440 are enriched in polar residues; that stretch reads NQDQNRPSKSL. A Phosphoserine modification is found at serine 474.

This sequence belongs to the NUR1 family. In terms of assembly, interacts with CSM1.

It is found in the nucleus membrane. In terms of biological role, member of a perinuclear network that controls recombination at multiple loci to maintain genome stability. Required for rDNA repeat stability. This is Nuclear rim protein 1 (NUR1) from Saccharomyces cerevisiae (strain YJM789) (Baker's yeast).